We begin with the raw amino-acid sequence, 215 residues long: UPF0502 protein YceH (215 aa).

Lys-80 carries the N6-acetyllysine modification.

It belongs to the UPF0502 family.

The chain is UPF0502 protein YceH from Shigella sonnei (strain Ss046).